The chain runs to 649 residues: Acetyl-coenzyme A synthetase (649 aa).

CoA is bound by residues 191–194 (RGGR), Thr-311, and Asn-335. ATP contacts are provided by residues 387–389 (GEP), 411–416 (DTWWQT), Asp-500, and Arg-515. Position 523 (Ser-523) interacts with CoA. Position 526 (Arg-526) interacts with ATP. Mg(2+) contacts are provided by Val-537, Phe-539, and Ile-542. Residue Arg-584 coordinates CoA. Residue Lys-609 is modified to N6-acetyllysine.

This sequence belongs to the ATP-dependent AMP-binding enzyme family. It depends on Mg(2+) as a cofactor. Acetylated. Deacetylation by the SIR2-homolog deacetylase activates the enzyme.

The catalysed reaction is acetate + ATP + CoA = acetyl-CoA + AMP + diphosphate. Catalyzes the conversion of acetate into acetyl-CoA (AcCoA), an essential intermediate at the junction of anabolic and catabolic pathways. AcsA undergoes a two-step reaction. In the first half reaction, AcsA combines acetate with ATP to form acetyl-adenylate (AcAMP) intermediate. In the second half reaction, it can then transfer the acetyl group from AcAMP to the sulfhydryl group of CoA, forming the product AcCoA. The chain is Acetyl-coenzyme A synthetase from Vibrio cholerae serotype O1 (strain ATCC 39315 / El Tor Inaba N16961).